The chain runs to 375 residues: Probable pectin lyase D (375 aa).

Residues 1–19 (MKYAAVLTTVAALASRALG) form the signal peptide. Cystine bridges form between Cys-82–Cys-101 and Cys-91–Cys-225. N-linked (GlcNAc...) asparagine glycosylation is present at Asn-128. Residue Arg-255 is part of the active site. A disulfide bridge links Cys-321 with Cys-329.

It belongs to the polysaccharide lyase 1 family.

It is found in the secreted. It catalyses the reaction Eliminative cleavage of (1-&gt;4)-alpha-D-galacturonan methyl ester to give oligosaccharides with 4-deoxy-6-O-methyl-alpha-D-galact-4-enuronosyl groups at their non-reducing ends.. Pectinolytic enzymes consist of four classes of enzymes: pectin lyase, polygalacturonase, pectin methylesterase and rhamnogalacturonase. Among pectinolytic enzymes, pectin lyase is the most important in depolymerization of pectin, since it cleaves internal glycosidic bonds of highly methylated pectins. The polypeptide is Probable pectin lyase D (pelD) (Aspergillus flavus (strain ATCC 200026 / FGSC A1120 / IAM 13836 / NRRL 3357 / JCM 12722 / SRRC 167)).